The sequence spans 1076 residues: Ribosome quality control complex subunit NEMF (1076 aa).

Thr-7 is modified (phosphothreonine). The stretch at 296–359 (VDEFYSKIEG…LIEMNLQIVD (64 aa)) forms a coiled coil. Ser-417 is subject to Phosphoserine. Positions 420-453 (EDDDVDGDVNVEKNETEPPKGKKKKQKNKQLQKP) are disordered. Residues 429 to 439 (NVEKNETEPPK) are compositionally biased toward basic and acidic residues. Residues 440-449 (GKKKKQKNKQ) show a composition bias toward basic residues. A coiled-coil region spans residues 483–514 (AAKKTQKTVEAAEKAFKSAEKKTKQTLKEVQT). Acidic residues-rich tracts occupy residues 691–710 (ISEEMEQLDGGDTSSDEDKE) and 742–754 (LIQEESSEDEGEY). Disordered regions lie at residues 691 to 715 (ISEEMEQLDGGDTSSDEDKEEHETP) and 742 to 972 (LIQE…DLDQ). Phosphoserine is present on residues Ser-747, Ser-748, and Ser-763. A compositionally biased stretch (basic and acidic residues) spans 755-768 (EEVRKDQDSVGEMK). Positions 777-795 (YPDTTIDLSHLQPQRSIQK) are enriched in polar residues. Phosphoserine is present on Ser-831. A compositionally biased stretch (basic and acidic residues) spans 839–854 (LEGKDKEKESTVHIET). Residues 869 to 894 (KRGQKSKMKKMKEKYKDQDEEDRELI) adopt a coiled-coil conformation. Residues 870 to 881 (RGQKSKMKKMKE) show a composition bias toward basic residues. Residues 937 to 965 (DNIKKETPFLEVITHELQDFAVDDPHDDK) show a composition bias toward basic and acidic residues.

This sequence belongs to the NEMF family. In terms of assembly, component of the ribosome quality control complex (RQC), composed of the E3 ubiquitin ligase LTN1, TCF25 and NEMF associated with the 60S ribosomal subunit. The complex probably also contains VCP/p97 and its ubiquitin-binding cofactors. Interacts (via its N-terminus) with XPO1. As to expression, expressed in brain, heart, liver, lung, spleen, and skeletal muscle. Also expressed at lower levels in stomach and testis.

It localises to the cytoplasm. It is found in the cytosol. The protein localises to the nucleus. Its function is as follows. Key component of the ribosome quality control complex (RQC), a ribosome-associated complex that mediates the extraction of incompletely synthesized nascent chains from stalled ribosomes as well as their ubiquitin-mediated proteasomal degradation. Thereby, frees 60S subunit ribosomes from the stalled translation complex and prevents the accumulation of nascent polypeptide chains that are potentially toxic for the cell. Within the RQC complex, NEMF specifically binds stalled 60S ribosomal subunits by recognizing an exposed, nascent chain-conjugated tRNA moiety and promotes the recruitment of LTN1 to stalled 60S subunits. Following binding to stalled 60S ribosomal subunits, NEMF mediates CAT tailing by recruiting alanine-charged tRNA to the A-site and directing the elongation of stalled nascent chains independently of mRNA or 40S subunits, leading to non-templated C-terminal alanine extensions (CAT tails). Mainly recruits alanine-charged tRNAs, but can also other amino acid-charged tRNAs. CAT tailing is required to promote ubiquitination of stalled nascent chains by different E3 ubiquitin-protein ligases. In the canonical RQC pathway (RQC-L), CAT tailing facilitates LTN1-dependent ubiquitination by exposing lysine residues that would otherwise remain buried in the ribosomal exit tunnel. In the alternative RQC pathway (RQC-C) CAT tailing creates an C-degron mainly composed of alanine that is recognized by the CRL2(KLHDC10) and RCHY1/PIRH2 E3 ligases, leading to ubiquitination and degradation of stalled nascent chains. NEMF may also indirectly play a role in nuclear export. The sequence is that of Ribosome quality control complex subunit NEMF from Homo sapiens (Human).